Consider the following 1193-residue polypeptide: Structural maintenance of chromosomes protein 3 homolog (1193 aa).

31–38 (GFNGSGKS) is a binding site for ATP. Position 101 is an N6-acetyllysine (K101). Coiled-coil stretches lie at residues 179–286 (SKKV…LNKT) and 332–483 (ILRV…EIIK). Residues 505 to 631 (ENILGFLIDN…VKSLESCENY (127 aa)) enclose the SMC hinge domain. Residues 665–993 (TVYNKLKELK…SHKNIKDMIQ (329 aa)) adopt a coiled-coil conformation.

It belongs to the SMC family. SMC3 subfamily. In terms of assembly, component of the cohesin complex. Post-translationally, acetylation at Lys-101 by ESCO1 is important for genome stability and S phase sister chromatid cohesion.

The protein resides in the nucleus. Central component of cohesin, a complex required for chromosome cohesion during the cell cycle. The cohesin complex may form a large proteinaceous ring within which sister chromatids can be trapped. At anaphase, the complex is cleaved and dissociates from chromatin, allowing sister chromatids to segregate. Cohesion is coupled to DNA replication and is involved in DNA repair. The cohesin complex also plays an important role in spindle pole assembly during mitosis and in chromosomes movement. The polypeptide is Structural maintenance of chromosomes protein 3 homolog (Plasmodium falciparum (isolate 3D7)).